The chain runs to 149 residues: Deoxyuridine 5'-triphosphate nucleotidohydrolase (149 aa).

Substrate contacts are provided by residues Arg68–Gly70, Asn81, Leu85–Asp87, and Met95.

Belongs to the dUTPase family. Mg(2+) is required as a cofactor.

It catalyses the reaction dUTP + H2O = dUMP + diphosphate + H(+). Its pathway is pyrimidine metabolism; dUMP biosynthesis; dUMP from dCTP (dUTP route): step 2/2. Functionally, this enzyme is involved in nucleotide metabolism: it produces dUMP, the immediate precursor of thymidine nucleotides and it decreases the intracellular concentration of dUTP so that uracil cannot be incorporated into DNA. The polypeptide is Deoxyuridine 5'-triphosphate nucleotidohydrolase (Bordetella avium (strain 197N)).